Here is a 114-residue protein sequence, read N- to C-terminus: C-X-C motif chemokine 6 (114 aa).

The first 37 residues, 1–37 (MSLPSSRAARVPGPSGSLCALLALLLLLTPPGPLASA), serve as a signal peptide directing secretion. 2 disulfide bridges follow: C49-C75 and C51-C91.

The protein belongs to the intercrine alpha (chemokine CxC) family.

The protein localises to the secreted. Functionally, chemotactic for neutrophil granulocytes. Signals through binding and activation of its receptors (CXCR1 and CXCR2). In addition to its chemotactic and angiogenic properties, it has strong antibacterial activity against Gram-positive and Gram-negative bacteria (90-fold-higher when compared to CXCL5 and CXCL7). The chain is C-X-C motif chemokine 6 (CXCL6) from Homo sapiens (Human).